Reading from the N-terminus, the 173-residue chain is Crossover junction endodeoxyribonuclease RuvC (173 aa).

Residues D8, E67, and D139 contribute to the active site. D8, E67, and D139 together coordinate Mg(2+).

It belongs to the RuvC family. As to quaternary structure, homodimer which binds Holliday junction (HJ) DNA. The HJ becomes 2-fold symmetrical on binding to RuvC with unstacked arms; it has a different conformation from HJ DNA in complex with RuvA. In the full resolvosome a probable DNA-RuvA(4)-RuvB(12)-RuvC(2) complex forms which resolves the HJ. It depends on Mg(2+) as a cofactor.

It localises to the cytoplasm. The catalysed reaction is Endonucleolytic cleavage at a junction such as a reciprocal single-stranded crossover between two homologous DNA duplexes (Holliday junction).. In terms of biological role, the RuvA-RuvB-RuvC complex processes Holliday junction (HJ) DNA during genetic recombination and DNA repair. Endonuclease that resolves HJ intermediates. Cleaves cruciform DNA by making single-stranded nicks across the HJ at symmetrical positions within the homologous arms, yielding a 5'-phosphate and a 3'-hydroxyl group; requires a central core of homology in the junction. The consensus cleavage sequence is 5'-(A/T)TT(C/G)-3'. Cleavage occurs on the 3'-side of the TT dinucleotide at the point of strand exchange. HJ branch migration catalyzed by RuvA-RuvB allows RuvC to scan DNA until it finds its consensus sequence, where it cleaves and resolves the cruciform DNA. This chain is Crossover junction endodeoxyribonuclease RuvC, found in Vibrio atlanticus (strain LGP32) (Vibrio splendidus (strain Mel32)).